Here is a 338-residue protein sequence, read N- to C-terminus: SPbeta prophage-derived uncharacterized protein YonB (338 aa).

The protein is SPbeta prophage-derived uncharacterized protein YonB (yonB) of Bacillus subtilis (strain 168).